A 145-amino-acid chain; its full sequence is Heat shock protein hsp-16.2 (145 aa).

Positions 32–137 (VCRISPSESS…QGRSIPIQQA (106 aa)) constitute a sHSP domain.

The protein belongs to the small heat shock protein (HSP20) family.

The sequence is that of Heat shock protein hsp-16.2 from Caenorhabditis elegans.